Consider the following 434-residue polypeptide: Probable exopolygalacturonase A (434 aa).

A signal peptide spans 1–19; the sequence is MKLPILVTLFITLPALCVS. 5 N-linked (GlcNAc...) asparagine glycosylation sites follow: N46, N57, N106, N199, and N207. The stretch at 232–253 is one PbH1 1 repeat; sequence SSNIVIQDSRIVNTDDCVSFKP. D246 functions as the Proton donor in the catalytic mechanism. Residues C248 and C265 are joined by a disulfide bond. A glycan (N-linked (GlcNAc...) asparagine) is linked at N254. A PbH1 2 repeat occupies 255–275; the sequence is STQIVIQNLDCTGSHGISVGS. H269 is a catalytic residue. N293, N329, and N354 each carry an N-linked (GlcNAc...) asparagine glycan. Residues C392 and C398 are joined by a disulfide bond. N400 is a glycosylation site (N-linked (GlcNAc...) asparagine).

This sequence belongs to the glycosyl hydrolase 28 family.

The protein localises to the secreted. The catalysed reaction is [(1-&gt;4)-alpha-D-galacturonosyl](n) + H2O = alpha-D-galacturonate + [(1-&gt;4)-alpha-D-galacturonosyl](n-1). Specific in hydrolyzing the terminal glycosidic bond of polygalacturonic acid and oligogalacturonates. This is Probable exopolygalacturonase A (pgxA) from Aspergillus niger (strain ATCC MYA-4892 / CBS 513.88 / FGSC A1513).